The following is a 143-amino-acid chain: uncharacterized protein (143 aa).

An N-terminal signal peptide occupies residues 1 to 32 (MITNLRRRTAMAAAGLGAALGLGILLVPTVDA).

This sequence to M.tuberculosis Rv1269c.

This is an uncharacterized protein from Mycobacterium tuberculosis (strain CDC 1551 / Oshkosh).